The primary structure comprises 163 residues: NADH-quinone oxidoreductase subunit I (163 aa).

4Fe-4S ferredoxin-type domains lie at Leu53–Gly83 and Val94–Asn123. Residues Cys63, Cys66, Cys69, Cys73, Cys103, Cys106, Cys109, and Cys113 each coordinate [4Fe-4S] cluster.

It belongs to the complex I 23 kDa subunit family. As to quaternary structure, NDH-1 is composed of 14 different subunits. Subunits NuoA, H, J, K, L, M, N constitute the membrane sector of the complex. It depends on [4Fe-4S] cluster as a cofactor.

It is found in the cell inner membrane. It catalyses the reaction a quinone + NADH + 5 H(+)(in) = a quinol + NAD(+) + 4 H(+)(out). In terms of biological role, NDH-1 shuttles electrons from NADH, via FMN and iron-sulfur (Fe-S) centers, to quinones in the respiratory chain. The immediate electron acceptor for the enzyme in this species is believed to be ubiquinone. Couples the redox reaction to proton translocation (for every two electrons transferred, four hydrogen ions are translocated across the cytoplasmic membrane), and thus conserves the redox energy in a proton gradient. The sequence is that of NADH-quinone oxidoreductase subunit I from Brucella suis (strain ATCC 23445 / NCTC 10510).